Here is a 352-residue protein sequence, read N- to C-terminus: Photosystem II D2 protein (352 aa).

Threonine 2 is modified (N-acetylthreonine). Threonine 2 carries the post-translational modification Phosphothreonine. The helical transmembrane segment at 40 to 60 threads the bilayer; sequence CAYFAVGGWLTGTTFVTSWYT. Histidine 117 provides a ligand contact to chlorophyll a. Residues 124–140 form a helical membrane-spanning segment; it reads GFMLRQFEIARAIGLRP. The pheophytin a site is built by glutamine 129 and asparagine 142. A helical membrane pass occupies residues 152–165; the sequence is VFVSVFLIYPLGQS. Position 197 (histidine 197) interacts with chlorophyll a. A helical membrane pass occupies residues 207 to 227; the sequence is AALLCAIHGATVENTLFEDGD. Residues histidine 214 and phenylalanine 261 each contribute to the a plastoquinone site. Residue histidine 214 coordinates Fe cation. Histidine 268 lines the Fe cation pocket. Residues 278–294 traverse the membrane as a helical segment; that stretch reads GLWMSAIGVVGLALNLR.

This sequence belongs to the reaction center PufL/M/PsbA/D family. As to quaternary structure, PSII is composed of 1 copy each of membrane proteins PsbA, PsbB, PsbC, PsbD, PsbE, PsbF, PsbH, PsbI, PsbJ, PsbK, PsbL, PsbM, PsbT, PsbX, PsbY, PsbZ, Psb30/Ycf12, at least 3 peripheral proteins of the oxygen-evolving complex and a large number of cofactors. It forms dimeric complexes. The D1/D2 heterodimer binds P680, chlorophylls that are the primary electron donor of PSII, and subsequent electron acceptors. It shares a non-heme iron and each subunit binds pheophytin, quinone, additional chlorophylls, carotenoids and lipids. There is also a Cl(-1) ion associated with D1 and D2, which is required for oxygen evolution. The PSII complex binds additional chlorophylls, carotenoids and specific lipids. serves as cofactor.

It is found in the plastid. The protein localises to the chloroplast thylakoid membrane. The enzyme catalyses 2 a plastoquinone + 4 hnu + 2 H2O = 2 a plastoquinol + O2. Functionally, photosystem II (PSII) is a light-driven water:plastoquinone oxidoreductase that uses light energy to abstract electrons from H(2)O, generating O(2) and a proton gradient subsequently used for ATP formation. It consists of a core antenna complex that captures photons, and an electron transfer chain that converts photonic excitation into a charge separation. The D1/D2 (PsbA/PsbD) reaction center heterodimer binds P680, the primary electron donor of PSII as well as several subsequent electron acceptors. D2 is needed for assembly of a stable PSII complex. The protein is Photosystem II D2 protein of Nephroselmis olivacea (Green alga).